We begin with the raw amino-acid sequence, 972 residues long: Macrophage colony-stimulating factor 1 receptor (972 aa).

Positions 1–19 (MGPGVLLLLLVATAWHGQG) are cleaved as a signal peptide. Residues 20–517 (IPVIEPSVPE…HPPDEFLFTP (498 aa)) are Extracellular-facing. Ig-like C2-type domains lie at 21–104 (PVIE…VKDP), 107–197 (PWNV…KVQK), 203–290 (PALT…HSTS), 299–399 (AYLN…LTLR), and 402–502 (PEVS…IPIS). Cystine bridges form between cysteine 42–cysteine 84, cysteine 127–cysteine 177, and cysteine 224–cysteine 278. Asparagine 45, asparagine 73, asparagine 153, asparagine 240, asparagine 275, asparagine 302, asparagine 335, asparagine 353, asparagine 412, asparagine 428, and asparagine 480 each carry an N-linked (GlcNAc...) asparagine glycan. A disulfide bond links cysteine 419 and cysteine 485. The helical transmembrane segment at 518–538 (VVVACMSIMALLLLLLLLLLY) threads the bilayer. The Cytoplasmic segment spans residues 539–972 (KYKQKPKYQV…LLQPNNYQFC (434 aa)). The regulatory juxtamembrane domain stretch occupies residues 542-574 (QKPKYQVRWKIIESYEGNSYTFIDPTQLPYNEK). Tyrosine 546 and tyrosine 561 each carry phosphotyrosine; by autocatalysis. One can recognise a Protein kinase domain in the interval 582–910 (LQFGKTLGAG…PTFQQICSFL (329 aa)). Residues 588 to 596 (LGAGAFGKV) and lysine 616 contribute to the ATP site. Phosphotyrosine; by autocatalysis is present on residues tyrosine 699 and tyrosine 708. A Phosphoserine modification is found at serine 713. Tyrosine 723 carries the phosphotyrosine; by autocatalysis modification. Residue aspartate 778 is the Proton acceptor of the active site. Residues 796-818 (DFGLARDIMNDSNYIVKGNARLP) are activation loop. Tyrosine 809 and tyrosine 923 each carry phosphotyrosine; by autocatalysis. Positions 918 to 950 (RRERDYTNLPSSSRSGGSGSSSSELEEESSSEH) are disordered. The segment covering 928–940 (SSSRSGGSGSSSS) has biased composition (low complexity). The residue at position 969 (tyrosine 969) is a Phosphotyrosine; by autocatalysis.

It belongs to the protein kinase superfamily. Tyr protein kinase family. CSF-1/PDGF receptor subfamily. As to quaternary structure, interacts with INPPL1/SHIP2 and THOC5. Monomer. Homodimer. Interacts with CSF1 and IL34. Interaction with dimeric CSF1 or IL34 leads to receptor homodimerization. Interacts (tyrosine phosphorylated) with PLCG2 (via SH2 domain). Interacts (tyrosine phosphorylated) with PIK3R1 (via SH2 domain). Interacts (tyrosine phosphorylated) with FYN, YES1 and SRC (via SH2 domain). Interacts (tyrosine phosphorylated) with CBL, GRB2 and SLA2. Autophosphorylated in response to CSF1 or IL34 binding. Phosphorylation at Tyr-561 is important for normal down-regulation of signaling by ubiquitination, internalization and degradation. Phosphorylation at Tyr-561 and Tyr-809 is important for interaction with SRC family members, including FYN, YES1 and SRC, and for subsequent activation of these protein kinases. Phosphorylation at Tyr-699 and Tyr-923 is important for interaction with GRB2. Phosphorylation at Tyr-723 is important for interaction with PIK3R1. Phosphorylation at Tyr-708 is important for normal receptor degradation. Phosphorylation at Tyr-723 and Tyr-809 is important for interaction with PLCG2. Phosphorylation at Tyr-969 is important for interaction with CBL. Dephosphorylation by PTPN2 negatively regulates downstream signaling and macrophage differentiation. Post-translationally, ubiquitinated. Becomes rapidly polyubiquitinated after autophosphorylation, leading to its degradation. Expressed in bone marrow and in differentiated blood mononuclear cells.

It is found in the cell membrane. It carries out the reaction L-tyrosyl-[protein] + ATP = O-phospho-L-tyrosyl-[protein] + ADP + H(+). With respect to regulation, present in an inactive conformation in the absence of bound ligand. CSF1 or IL34 binding leads to dimerization and activation by autophosphorylation on tyrosine residues. Inhibited by imatinib/STI-571 (Gleevec), dasatinib, sunitinib/SU11248, lestaurtinib/CEP-701, midostaurin/PKC-412, Ki20227, linifanib/ABT-869, Axitinib/AG013736, sorafenib/BAY 43-9006 and GW2580. Tyrosine-protein kinase that acts as a cell-surface receptor for CSF1 and IL34 and plays an essential role in the regulation of survival, proliferation and differentiation of hematopoietic precursor cells, especially mononuclear phagocytes, such as macrophages and monocytes. Promotes the release of pro-inflammatory chemokines in response to IL34 and CSF1, and thereby plays an important role in innate immunity and in inflammatory processes. Plays an important role in the regulation of osteoclast proliferation and differentiation, the regulation of bone resorption, and is required for normal bone and tooth development. Required for normal male and female fertility, and for normal development of milk ducts and acinar structures in the mammary gland during pregnancy. Promotes reorganization of the actin cytoskeleton, regulates formation of membrane ruffles, cell adhesion and cell migration, and promotes cancer cell invasion. Activates several signaling pathways in response to ligand binding, including the ERK1/2 and the JNK pathway. Phosphorylates PIK3R1, PLCG2, GRB2, SLA2 and CBL. Activation of PLCG2 leads to the production of the cellular signaling molecules diacylglycerol and inositol 1,4,5-trisphosphate, that then lead to the activation of protein kinase C family members, especially PRKCD. Phosphorylation of PIK3R1, the regulatory subunit of phosphatidylinositol 3-kinase, leads to activation of the AKT1 signaling pathway. Activated CSF1R also mediates activation of the MAP kinases MAPK1/ERK2 and/or MAPK3/ERK1, and of the SRC family kinases SRC, FYN and YES1. Activated CSF1R transmits signals both via proteins that directly interact with phosphorylated tyrosine residues in its intracellular domain, or via adapter proteins, such as GRB2. Promotes activation of STAT family members STAT3, STAT5A and/or STAT5B. Promotes tyrosine phosphorylation of SHC1 and INPP5D/SHIP-1. Receptor signaling is down-regulated by protein phosphatases, such as INPP5D/SHIP-1, that dephosphorylate the receptor and its downstream effectors, and by rapid internalization of the activated receptor. In the central nervous system, may play a role in the development of microglia macrophages. The sequence is that of Macrophage colony-stimulating factor 1 receptor (CSF1R) from Homo sapiens (Human).